The primary structure comprises 101 residues: Urease subunit beta (101 aa).

This sequence belongs to the urease beta subunit family. Heterotrimer of UreA (gamma), UreB (beta) and UreC (alpha) subunits. Three heterotrimers associate to form the active enzyme.

It localises to the cytoplasm. It carries out the reaction urea + 2 H2O + H(+) = hydrogencarbonate + 2 NH4(+). It functions in the pathway nitrogen metabolism; urea degradation; CO(2) and NH(3) from urea (urease route): step 1/1. The chain is Urease subunit beta from Burkholderia vietnamiensis (strain G4 / LMG 22486) (Burkholderia cepacia (strain R1808)).